The sequence spans 409 residues: D-galactonate dehydratase family member Achl_0790 (409 aa).

Asp217 serves as a coordination point for Mg(2+). His219 lines the D-arabinonate pocket. Positions 243 and 269 each coordinate Mg(2+). Positions 269, 290, 319, and 346 each coordinate D-arabinonate.

The protein belongs to the mandelate racemase/muconate lactonizing enzyme family. GalD subfamily.

In terms of biological role, has no detectable activity with D-mannonate and with a panel of 70 other acid sugars (in vitro), in spite of the conservation of the residues that are expected to be important for catalytic activity and cofactor binding. May have evolved a divergent function. This chain is D-galactonate dehydratase family member Achl_0790, found in Pseudarthrobacter chlorophenolicus (strain ATCC 700700 / DSM 12829 / CIP 107037 / JCM 12360 / KCTC 9906 / NCIMB 13794 / A6) (Arthrobacter chlorophenolicus).